Consider the following 252-residue polypeptide: Putative teichuronic acid biosynthesis glycosyltransferase TuaG (252 aa).

Belongs to the glycosyltransferase 2 family.

Its pathway is cell wall biogenesis; teichuronic acid biosynthesis. This Bacillus subtilis (strain 168) protein is Putative teichuronic acid biosynthesis glycosyltransferase TuaG (tuaG).